The following is a 152-amino-acid chain: Transcriptional regulator MraZ (152 aa).

SpoVT-AbrB domains follow at residues Ala5–Glu52 and Ala81–Thr124.

The protein belongs to the MraZ family. As to quaternary structure, forms oligomers.

The protein localises to the cytoplasm. It is found in the nucleoid. In terms of biological role, negatively regulates its own expression and that of the subsequent genes in the proximal part of the division and cell wall (dcw) gene cluster. Acts by binding directly to DNA. May also regulate the expression of genes outside the dcw cluster. In Pectobacterium atrosepticum (strain SCRI 1043 / ATCC BAA-672) (Erwinia carotovora subsp. atroseptica), this protein is Transcriptional regulator MraZ.